We begin with the raw amino-acid sequence, 618 residues long: Grainyhead-like protein 1 homolog (618 aa).

Residues 1–91 are transcription activation; the sequence is MTQEYDNKRP…EVEHPEPDHS (91 aa). Residues 74 to 92 show a composition bias toward basic and acidic residues; it reads RRSSTAKPEVEHPEPDHSK. The segment at 74 to 94 is disordered; the sequence is RRSSTAKPEVEHPEPDHSKRN. Threonine 208 is modified (phosphothreonine). One can recognise a Grh/CP2 DB domain in the interval 248-474; sequence SGNNFEYTLE…DLDTQPVLFI (227 aa). 2 interaction with DNA regions span residues 380–389 and 427–430; these read TDFSSQKGVK and RKIR.

This sequence belongs to the grh/CP2 family. Grainyhead subfamily. As to quaternary structure, binds DNA as homodimer. Homodimer, also forms heterodimers with GRHL2 or GRHL3. Post-translationally, methylation at Arg-9 and Lys-116 may be involved in regulating transcriptional activation.

The protein localises to the nucleus. Its function is as follows. Transcription factor involved in epithelial development. Binds directly to the consensus DNA sequence 5'-AACCGGTT-3'. Important regulator of DSG1 in the context of hair anchorage and epidermal differentiation, participates in the maintenance of the skin barrier. There is no genetic interaction with GRHL3, nor functional cooperativity due to diverse target gene selectivity during epithelia development. May play a role in regulating glucose homeostasis and insulin signaling. This chain is Grainyhead-like protein 1 homolog (GRHL1), found in Pongo abelii (Sumatran orangutan).